A 632-amino-acid chain; its full sequence is tRNA uridine 5-carboxymethylaminomethyl modification enzyme MnmG (632 aa).

Residues Gly13–Gly18, Val125, and Ser180 each bind FAD. Gly273 to Phe287 is a binding site for NAD(+). Gln370 serves as a coordination point for FAD.

Belongs to the MnmG family. As to quaternary structure, homodimer. Heterotetramer of two MnmE and two MnmG subunits. Requires FAD as cofactor.

Its subcellular location is the cytoplasm. In terms of biological role, NAD-binding protein involved in the addition of a carboxymethylaminomethyl (cmnm) group at the wobble position (U34) of certain tRNAs, forming tRNA-cmnm(5)s(2)U34. In Nitrosospira multiformis (strain ATCC 25196 / NCIMB 11849 / C 71), this protein is tRNA uridine 5-carboxymethylaminomethyl modification enzyme MnmG.